Reading from the N-terminus, the 93-residue chain is Late embryogenesis abundant protein B19.1A (93 aa).

The disordered stretch occupies residues 1–93; that stretch reads MASGQQERSQ…IDESKFKTKS (93 aa). 2 stretches are compositionally biased toward basic and acidic residues: residues 9–19 and 73–93; these read SQLDRKAREGE and GGERAAREGIDIDESKFKTKS.

This sequence belongs to the small hydrophilic plant seed protein family. Embryos and young seedlings.

In terms of biological role, lea proteins are late embryonic proteins abundant in higher plant seed embryos. It may have a role in desiccation tolerance by acting as an osmoprotective protein or as a desiccation-damage repair protein. The sequence is that of Late embryogenesis abundant protein B19.1A (B19.1A) from Hordeum vulgare (Barley).